The primary structure comprises 395 residues: Thyroid hormone receptor beta (395 aa).

A modulating region spans residues M1–L31. Residues D29–D106 constitute a DNA-binding region (nuclear receptor). C32, C35, C49, C52, C70, C76, C86, and C89 together coordinate Zn(2+). NR C4-type zinc fingers lie at residues C32–C52 and C70–C89. The 254-residue stretch at E142–D395 folds into the NR LBD domain. Positions 216, 265, and 369 each coordinate 3,3',5-triiodo-L-thyronine.

Belongs to the nuclear hormone receptor family. NR1 subfamily. As to quaternary structure, interacts (via the ligand-binding domain) with ncoa2. In terms of tissue distribution, widely expressed in a range of adult tissues including the brain, eye, fin, gill, intestine, liver, swim bladder and ovary. In the eye, expressed in the outer nuclear layer of the retina.

The protein localises to the nucleus. In terms of biological role, nuclear hormone receptor that can act as a repressor or activator of transcription. High affinity receptor for the thyroid gland hormone triiodothyronine (T3). Transactivating activity is ligand-dependent, and is repressed in the absence of T3. This chain is Thyroid hormone receptor beta (thrb), found in Danio rerio (Zebrafish).